Reading from the N-terminus, the 437-residue chain is 5-hydroxytryptamine receptor 3B (437 aa).

The N-terminal stretch at 1 to 21 (MILLWSCLLVAVVGILGTATP) is a signal peptide. The Extracellular portion of the chain corresponds to 22 to 235 (QPGNSSLHRL…RFNVVIRRCP (214 aa)). Residues Asn-25, Asn-92, and Asn-134 are each glycosylated (N-linked (GlcNAc...) asparagine). The cysteines at positions 151 and 165 are disulfide-linked. Residues 236 to 255 (LAYVVSLLIPSIFLMLVDLG) traverse the membrane as a helical segment. The Cytoplasmic portion of the chain corresponds to 256–266 (SFYLPPNCRAR). Residues 267-284 (IVFKTNVLVGYTVFRVNM) form a helical membrane-spanning segment. The Extracellular segment spans residues 285-295 (SDEVPRSAGCT). The chain crosses the membrane as a helical span at residues 296-324 (SLIGVFFTVCMALLVLSLSKSILLIKFLY). Residues 325–410 (EERHSEQERP…WLAILCHFDQ (86 aa)) lie on the Cytoplasmic side of the membrane. Residues 377-409 (FWFQLQSINNSLRTRDQVYQKEVEWLAILCHFD) form an HA-stretch; determines single-channel conductance in 5-HT3 receptors region. A helical membrane pass occupies residues 411-434 (LLFRIYLAVLGLYTVTLCSLWALW). Over 435–437 (SRM) the chain is Extracellular.

This sequence belongs to the ligand-gated ion channel (TC 1.A.9) family. 5-hydroxytryptamine receptor (TC 1.A.9.2) subfamily. HTR3B sub-subfamily. Forms homopentameric as well as heteropentameric serotonin-activated cation-selective channel complexes with HTR3A. The homomeric complex is not functional. Heteropentameric complexes display properties which resemble that of neuronal serotonin-activated channels in vivo. N-glycosylation is required for membrane localization. In terms of tissue distribution, expressed in peripheral neurons, but not in neurons of the central nervous system.

It localises to the postsynaptic cell membrane. The protein localises to the cell membrane. It carries out the reaction Na(+)(in) = Na(+)(out). It catalyses the reaction K(+)(in) = K(+)(out). The enzyme catalyses Ca(2+)(in) = Ca(2+)(out). In terms of biological role, forms serotonin (5-hydroxytryptamine/5-HT3)-activated cation-selective channel complexes, which when activated cause fast, depolarizing responses in neurons. This chain is 5-hydroxytryptamine receptor 3B, found in Rattus norvegicus (Rat).